The chain runs to 459 residues: Protoheme IX farnesyltransferase (459 aa).

The unknown stretch occupies residues 1-184 (MSRNTATQFV…AYVQLMKPRL (184 aa)). A run of 12 helical transmembrane segments spans residues 9–29 (FVAVLAAAAMGVYSLLVLGAT), 66–86 (AAALTGLAVVGAAVLAWRTGA), 93–113 (AVTLALALYPVQVVIGAYTAM), 123–143 (VHLTLGVGIFASLVVALAWTL), 184–204 (LMWLLCLVAGAGMALASSQLG), 211–231 (AATVVLTLGGGVLSIGASGTF), 262–282 (LAFGVVLGVASLAAFAAVNLL), 284–304 (AVLGLTAIAFYSIVYTLVLKP), 325–345 (WVAVTGAVGVGGVVLAGVIFL), 382–402 (HIVYYIGATLASAVVLAELTG), 403–423 (LGPLYAATTVLLGAVFLYFAI), and 438–458 (FHASNAYLGCLLVAVVLDTMV). The tract at residues 185 to 459 (MWLLCLVAGA…VAVVLDTMVV (275 aa)) is protoheme IX prenyltransferase.

It in the C-terminal section; belongs to the UbiA prenyltransferase family. Protoheme IX farnesyltransferase subfamily.

It is found in the cell membrane. The catalysed reaction is heme b + (2E,6E)-farnesyl diphosphate + H2O = Fe(II)-heme o + diphosphate. The protein operates within porphyrin-containing compound metabolism; heme O biosynthesis; heme O from protoheme: step 1/1. Functionally, converts heme B (protoheme IX) to heme O by substitution of the vinyl group on carbon 2 of heme B porphyrin ring with a hydroxyethyl farnesyl side group. The polypeptide is Protoheme IX farnesyltransferase (ctaB) (Halobacterium salinarum (strain ATCC 29341 / DSM 671 / R1)).